Here is a 223-residue protein sequence, read N- to C-terminus: Serine/threonine/tyrosine-interacting protein B (223 aa).

The 149-residue stretch at 28–176 folds into the Tyrosine-protein phosphatase domain; sequence EMQEILPGLF…LQEYEAIYLA (149 aa).

This sequence belongs to the protein-tyrosine phosphatase family. Non-receptor class subfamily.

Functionally, catalytically inactive phosphatase. In Xenopus laevis (African clawed frog), this protein is Serine/threonine/tyrosine-interacting protein B (styx-b).